The sequence spans 165 residues: Small ribosomal subunit protein uS5 (165 aa).

The S5 DRBM domain occupies 13–76 (LEEKVLVVNR…DAARKNLVSI (64 aa)).

Belongs to the universal ribosomal protein uS5 family. As to quaternary structure, part of the 30S ribosomal subunit. Contacts proteins S4 and S8.

Its function is as follows. With S4 and S12 plays an important role in translational accuracy. Functionally, located at the back of the 30S subunit body where it stabilizes the conformation of the head with respect to the body. The protein is Small ribosomal subunit protein uS5 of Chlamydia muridarum (strain MoPn / Nigg).